Reading from the N-terminus, the 561-residue chain is uncharacterized protein (561 aa).

The segment covering 314 to 323 (ANNGSGDSSS) has biased composition (low complexity). Residues 314 to 366 (ANNGSGDSSSTALNNESPNTTPKSRTFFSPKGHRRNSSHVSSLTSRSTKKPIT) form a disordered region. Polar residues predominate over residues 324–340 (TALNNESPNTTPKSRTF). Ser514 carries the post-translational modification Phosphoserine.

Its subcellular location is the cytoplasm. This is an uncharacterized protein from Saccharomyces cerevisiae (strain ATCC 204508 / S288c) (Baker's yeast).